A 288-amino-acid polypeptide reads, in one-letter code: Bifunctional protein FolD (288 aa).

NADP(+) contacts are provided by residues 168–170, threonine 195, and valine 236; that span reads GRG.

The protein belongs to the tetrahydrofolate dehydrogenase/cyclohydrolase family. As to quaternary structure, homodimer.

The catalysed reaction is (6R)-5,10-methylene-5,6,7,8-tetrahydrofolate + NADP(+) = (6R)-5,10-methenyltetrahydrofolate + NADPH. It carries out the reaction (6R)-5,10-methenyltetrahydrofolate + H2O = (6R)-10-formyltetrahydrofolate + H(+). The protein operates within one-carbon metabolism; tetrahydrofolate interconversion. Its function is as follows. Catalyzes the oxidation of 5,10-methylenetetrahydrofolate to 5,10-methenyltetrahydrofolate and then the hydrolysis of 5,10-methenyltetrahydrofolate to 10-formyltetrahydrofolate. This Mycobacterium sp. (strain JLS) protein is Bifunctional protein FolD.